Consider the following 333-residue polypeptide: Lipoyl synthase (333 aa).

The interval 1 to 29 (MTDSAAGATEVATPATPSNKPYDATAKQK) is disordered. Residues Cys-80, Cys-85, Cys-91, Cys-106, Cys-110, Cys-113, and Ser-320 each contribute to the [4Fe-4S] cluster site. The Radical SAM core domain maps to 91-309 (CFGKGTATFM…EEKAYEMGFT (219 aa)).

It belongs to the radical SAM superfamily. Lipoyl synthase family. Requires [4Fe-4S] cluster as cofactor.

The protein resides in the cytoplasm. The enzyme catalyses [[Fe-S] cluster scaffold protein carrying a second [4Fe-4S](2+) cluster] + N(6)-octanoyl-L-lysyl-[protein] + 2 oxidized [2Fe-2S]-[ferredoxin] + 2 S-adenosyl-L-methionine + 4 H(+) = [[Fe-S] cluster scaffold protein] + N(6)-[(R)-dihydrolipoyl]-L-lysyl-[protein] + 4 Fe(3+) + 2 hydrogen sulfide + 2 5'-deoxyadenosine + 2 L-methionine + 2 reduced [2Fe-2S]-[ferredoxin]. Its pathway is protein modification; protein lipoylation via endogenous pathway; protein N(6)-(lipoyl)lysine from octanoyl-[acyl-carrier-protein]: step 2/2. In terms of biological role, catalyzes the radical-mediated insertion of two sulfur atoms into the C-6 and C-8 positions of the octanoyl moiety bound to the lipoyl domains of lipoate-dependent enzymes, thereby converting the octanoylated domains into lipoylated derivatives. This chain is Lipoyl synthase, found in Ralstonia pickettii (strain 12J).